The primary structure comprises 219 residues: Proteasome subunit beta type-9 (219 aa).

Residues 1–20 (MLRAGAPTAGSFRTEEVHTG) constitute a propeptide, removed in mature form. T21 acts as the Nucleophile in catalysis. K53 and K109 each carry N6-acetyllysine.

The protein belongs to the peptidase T1B family. As to quaternary structure, the 26S proteasome consists of a 20S proteasome core and two 19S regulatory subunits. The 20S proteasome core is composed of 28 subunits that are arranged in four stacked rings, resulting in a barrel-shaped structure. The two end rings are each formed by seven alpha subunits, and the two central rings are each formed by seven beta subunits. The catalytic chamber with the active sites is on the inside of the barrel. Component of the immunoproteasome, where it displaces the equivalent housekeeping subunit PSMB6. Component of the spermatoproteasome, a form of the proteasome specifically found in testis. In terms of processing, autocleaved. The resulting N-terminal Thr residue of the mature subunit is responsible for the nucleophile proteolytic activity.

The protein resides in the cytoplasm. It localises to the nucleus. It catalyses the reaction Cleavage of peptide bonds with very broad specificity.. The proteasome is a multicatalytic proteinase complex which is characterized by its ability to cleave peptides with Arg, Phe, Tyr, Leu, and Glu adjacent to the leaving group at neutral or slightly basic pH. The proteasome has an ATP-dependent proteolytic activity. This subunit is involved in antigen processing to generate class I binding peptides. The polypeptide is Proteasome subunit beta type-9 (Psmb9) (Mus terricolor (Earth-colored mouse)).